A 314-amino-acid polypeptide reads, in one-letter code: UDP-N-acetylenolpyruvoylglucosamine reductase (314 aa).

Residues 25 to 191 form the FAD-binding PCMH-type domain; it reads KIGGPADLFA…VRVGMELRWG (167 aa). The active site involves arginine 170. Residue serine 220 is the Proton donor of the active site. Glutamate 291 is an active-site residue.

Belongs to the MurB family. It depends on FAD as a cofactor.

Its subcellular location is the cytoplasm. The enzyme catalyses UDP-N-acetyl-alpha-D-muramate + NADP(+) = UDP-N-acetyl-3-O-(1-carboxyvinyl)-alpha-D-glucosamine + NADPH + H(+). The protein operates within cell wall biogenesis; peptidoglycan biosynthesis. Functionally, cell wall formation. This Heliobacterium modesticaldum (strain ATCC 51547 / Ice1) protein is UDP-N-acetylenolpyruvoylglucosamine reductase.